We begin with the raw amino-acid sequence, 119 residues long: Large ribosomal subunit protein uL18 (119 aa).

The protein belongs to the universal ribosomal protein uL18 family. As to quaternary structure, part of the 50S ribosomal subunit; part of the 5S rRNA/L5/L18/L25 subcomplex. Contacts the 5S and 23S rRNAs.

In terms of biological role, this is one of the proteins that bind and probably mediate the attachment of the 5S RNA into the large ribosomal subunit, where it forms part of the central protuberance. This Xanthomonas oryzae pv. oryzae (strain PXO99A) protein is Large ribosomal subunit protein uL18.